Here is a 204-residue protein sequence, read N- to C-terminus: Holliday junction branch migration complex subunit RuvA (204 aa).

Residues 1-67 are domain I; sequence MIGYLEGKIL…QPKPVLIGFN (67 aa). Residues 68-145 are domain II; it reads SLEEREFFER…VFAGEHGGEP (78 aa). Residues 146 to 156 form a flexible linker region; the sequence is AGPAPVEENFH. The interval 156-204 is domain III; sequence HLLVLDVLVNQLGHKAAEAKELINQAIKRNPAISSPEELFDEVYRGETG.

The protein belongs to the RuvA family. Homotetramer. Forms an RuvA(8)-RuvB(12)-Holliday junction (HJ) complex. HJ DNA is sandwiched between 2 RuvA tetramers; dsDNA enters through RuvA and exits via RuvB. An RuvB hexamer assembles on each DNA strand where it exits the tetramer. Each RuvB hexamer is contacted by two RuvA subunits (via domain III) on 2 adjacent RuvB subunits; this complex drives branch migration. In the full resolvosome a probable DNA-RuvA(4)-RuvB(12)-RuvC(2) complex forms which resolves the HJ.

It localises to the cytoplasm. Its function is as follows. The RuvA-RuvB-RuvC complex processes Holliday junction (HJ) DNA during genetic recombination and DNA repair, while the RuvA-RuvB complex plays an important role in the rescue of blocked DNA replication forks via replication fork reversal (RFR). RuvA specifically binds to HJ cruciform DNA, conferring on it an open structure. The RuvB hexamer acts as an ATP-dependent pump, pulling dsDNA into and through the RuvAB complex. HJ branch migration allows RuvC to scan DNA until it finds its consensus sequence, where it cleaves and resolves the cruciform DNA. The protein is Holliday junction branch migration complex subunit RuvA of Desulfatibacillum aliphaticivorans.